Consider the following 336-residue polypeptide: Cytoskeleton protein RodZ (336 aa).

Residues 1–111 (MNTEATHDQN…LGKRRKKRDG (111 aa)) are Cytoplasmic-facing. The HTH cro/C1-type domain occupies 19–71 (LRNAREQLGLSQQAVAERLCLKVSTVRDIEEDKAPSDLASTFLRGYIRSYARL). The H-T-H motif DNA-binding region spans 30-49 (QQAVAERLCLKVSTVRDIEE). The chain crosses the membrane as a helical; Signal-anchor for type II membrane protein span at residues 112 to 132 (WLMSFTWLVLFVVVGLTGAWW). Topologically, residues 133–336 (WQNHKAQQEE…TLNAEPTPAQ (204 aa)) are periplasmic. Positions 155-243 (NADKDSGQSV…PSALPTSQAG (89 aa)) are disordered. The span at 161–175 (GQSVPLDTGAVTSQD) shows a compositional bias: polar residues. Composition is skewed to low complexity over residues 176–214 (TTPAQTAPAPATPVDSTAATQTQTPAPTAAATQNTVVAP) and 221–243 (TAATSAAPAATETPSALPTSQAG).

This sequence belongs to the RodZ family.

The protein resides in the cell inner membrane. In terms of biological role, cytoskeletal protein that is involved in cell-shape control through regulation of the length of the long axis. The sequence is that of Cytoskeleton protein RodZ from Salmonella newport (strain SL254).